The following is a 242-amino-acid chain: MKKTTKPPTGGYGGSGSHELYQRVKKKAGTIKASSRRWLERHLNDPYVHQSKVDGYRSRAAYKLIEINERYKFLKKGQKVIDLGAAPGGWCQVAERIVGSSNEKPSVVGIDYLHVDPLPRVAMLEMDFLHADAPQKLIETLGTKPDVVLSDMAAPTTGHRQTDHLRTIYLCEVAADFALSVLKPGGHFLAKAFQGGAENTLLAILKQHFKKVYHVKPPASRSESVELYLLALEFKGKTKIQE.

G88, W90, D111, D127, and D151 together coordinate S-adenosyl-L-methionine. K191 (proton acceptor) is an active-site residue.

Belongs to the class I-like SAM-binding methyltransferase superfamily. RNA methyltransferase RlmE family.

Its subcellular location is the cytoplasm. It catalyses the reaction uridine(2552) in 23S rRNA + S-adenosyl-L-methionine = 2'-O-methyluridine(2552) in 23S rRNA + S-adenosyl-L-homocysteine + H(+). Functionally, specifically methylates the uridine in position 2552 of 23S rRNA at the 2'-O position of the ribose in the fully assembled 50S ribosomal subunit. In Bartonella tribocorum (strain CIP 105476 / IBS 506), this protein is Ribosomal RNA large subunit methyltransferase E.